The chain runs to 321 residues: MKQNPKISLIGSGNIGGTLAHLISLRELGDIVLFDVTEGVPQGKALDLMQAGTIAGSDIKIKGTNDYKDIEGSDAIIITAGLPRKPGMSRDDLISINTGIMKTVAANVKKYAPDAFVIVITNPLDVMVYVMLKESGLPHNKVIGMAGVLDSSRFNLFLAEEFKVSVSNVNSMVLGGHGDAMVPLARYSTISGVPIPDLIKMGLSSNENIEKIIDRTRNGGGEIVALLKTGSAYYAPAASAIEMLESYLKDKRQILTCAAHLQGEYGVHDLYVGVPIMIGKEGVLKVIELQLTAEEKALFDKSVEGVKKLIETIKEMIKSYY.

Residues 11–16 and Asp35 each bind NAD(+); that span reads GSGNIG. Positions 84 and 90 each coordinate substrate. NAD(+) is bound by residues Asn97 and 120–122; that span reads ITN. Asn122 and Arg153 together coordinate substrate. Catalysis depends on His177, which acts as the Proton acceptor.

Belongs to the LDH/MDH superfamily. MDH type 3 family.

The enzyme catalyses (S)-malate + NAD(+) = oxaloacetate + NADH + H(+). Its function is as follows. Catalyzes the reversible oxidation of malate to oxaloacetate. This is Malate dehydrogenase from Rickettsia peacockii (strain Rustic).